Here is a 149-residue protein sequence, read N- to C-terminus: UPF0179 protein MM_0589 (149 aa).

Belongs to the UPF0179 family.

The polypeptide is UPF0179 protein MM_0589 (Methanosarcina mazei (strain ATCC BAA-159 / DSM 3647 / Goe1 / Go1 / JCM 11833 / OCM 88) (Methanosarcina frisia)).